The sequence spans 286 residues: General stress protein 39 (286 aa).

The tract at residues 1–26 is disordered; sequence MANYPKELPAQTQSRQPGIESEMNPS. Residue 46–70 participates in NAD(+) binding; it reads LITGGDSGIGRAVSVAYAKEGADIA. Ser178 provides a ligand contact to substrate. Tyr191 (proton acceptor) is an active-site residue.

The protein belongs to the short-chain dehydrogenases/reductases (SDR) family.

This chain is General stress protein 39 (ydaD), found in Bacillus subtilis (strain 168).